We begin with the raw amino-acid sequence, 317 residues long: Vacuolar arginine/histidine antiporter YPQ2 (317 aa).

Residues 1–13 lie on the Vacuolar side of the membrane; the sequence is MSCSNGIWPTVSN. In terms of domain architecture, PQ-loop 1 spans 8–71; the sequence is WPTVSNLCGS…AKLTGQLLFQ (64 aa). The helical transmembrane segment at 14–34 threads the bilayer; that stretch reads LCGSLSFFTSVISLFPQIIET. Topologically, residues 35 to 39 are cytoplasmic; it reads YRDKS. The helical transmembrane segment at 40-62 threads the bilayer; that stretch reads VDGLSPYFLLAWLCGDITSLIGA. Residues 63-71 are Vacuolar-facing; it reads KLTGQLLFQ. The helical transmembrane segment at 72-94 threads the bilayer; sequence ILLAIYFLLNDSFVCGQYYYYGV. Residues 95–143 lie on the Cytoplasmic side of the membrane; sequence LHENKLATVGHEPKPLLPELVENGELLREEEDMIQGGSSAESPRSSRRR. Ser-136 carries the post-translational modification Phosphoserine. Residues 144 to 164 traverse the membrane as a helical segment; the sequence is SAITAALAIAHTISTASAYPL. Residues 165 to 184 lie on the Vacuolar side of the membrane; that stretch reads NVGSTQSQVGPPGDGKNSQL. The helical transmembrane segment at 185-205 threads the bilayer; the sequence is GTILSWIGASFYVGARIPQLI. The PQ-loop 2 domain occupies 185 to 247; it reads GTILSWIGAS…SCRFLDNQNK (63 aa). The Cytoplasmic portion of the chain corresponds to 206 to 215; the sequence is KNYNRKSTDG. Residues 216–236 form a helical membrane-spanning segment; it reads LSPFLFATTLLCNITYNLSIF. Residues 237–249 are Vacuolar-facing; sequence TSCRFLDNQNKRE. Residues 250 to 270 form a helical membrane-spanning segment; sequence FIVNELPFIFGSAGTIAFDLI. The Cytoplasmic segment spans residues 271–317; sequence YFYQYYILYATDMQLRELERELYSPEEDSAAQLVTERTSLLSGETQT.

It belongs to the laat-1 family.

Its subcellular location is the vacuole membrane. It carries out the reaction L-histidine(out) + L-arginine(in) = L-histidine(in) + L-arginine(out). Functionally, amino acid transporter that moves arginine across the vacuolar membrane. Active during nitrogen starvation when it exports stored vacuolar arginine to the cytosol, for use as a nitrogen source. Has been shown to function as an arginine/histidine antiporter when substrate is present on both sides of the membrane, but may also function as a uniporter. This is Vacuolar arginine/histidine antiporter YPQ2 (YPQ2) from Saccharomyces cerevisiae (strain ATCC 204508 / S288c) (Baker's yeast).